The primary structure comprises 316 residues: Retinol dehydrogenase 12 (316 aa).

46–52 (GANTGIG) is a binding site for NADP(+). Ser-175 provides a ligand contact to substrate. Catalysis depends on Tyr-200, which acts as the Proton acceptor.

This sequence belongs to the short-chain dehydrogenases/reductases (SDR) family. As to expression, expressed in the retina.

It carries out the reaction all-trans-retinol + NADP(+) = all-trans-retinal + NADPH + H(+). The enzyme catalyses 11-cis-retinol + NADP(+) = 11-cis-retinal + NADPH + H(+). The catalysed reaction is 9-cis-retinol + NADP(+) = 9-cis-retinal + NADPH + H(+). It catalyses the reaction a 4-hydroxynonen-1-ol + NADP(+) = a 4-hydroxynonenal + NADPH + H(+). It carries out the reaction (E)-non-2-en-1-ol + NADP(+) = (E)-non-2-enal + NADPH + H(+). The enzyme catalyses (Z)-non-6-en-1-ol + NADP(+) = (Z)-non-6-enal + NADPH + H(+). The catalysed reaction is nonan-1-ol + NADP(+) = nonanal + NADPH + H(+). Its pathway is cofactor metabolism; retinol metabolism. Retinoids dehydrogenase/reductase with a clear preference for NADP. Displays high activity towards 9-cis, 11-cis and all-trans-retinal. Shows very weak activity towards 13-cis-retinol. Also exhibits activity, albeit with lower affinity than for retinaldehydes, towards lipid peroxidation products (C9 aldehydes) such as 4-hydroxynonenal and trans-2-nonenal. May play an important function in photoreceptor cells to detoxify 4-hydroxynonenal and potentially other toxic aldehyde products resulting from lipid peroxidation. Has no dehydrogenase activity towards steroids. The polypeptide is Retinol dehydrogenase 12 (RDH12) (Bos taurus (Bovine)).